A 236-amino-acid chain; its full sequence is Endonuclease V (236 aa).

Mg(2+) contacts are provided by aspartate 47 and aspartate 115.

This sequence belongs to the endonuclease V family. Mg(2+) is required as a cofactor.

The protein resides in the cytoplasm. The enzyme catalyses Endonucleolytic cleavage at apurinic or apyrimidinic sites to products with a 5'-phosphate.. DNA repair enzyme involved in the repair of deaminated bases. Selectively cleaves double-stranded DNA at the second phosphodiester bond 3' to a deoxyinosine leaving behind the intact lesion on the nicked DNA. The polypeptide is Endonuclease V (Xanthomonas campestris pv. campestris (strain B100)).